The sequence spans 152 residues: Globin, minor (152 aa).

The 141-residue stretch at 12–152 folds into the Globin domain; sequence VNNSYHKDLL…ALIAVVQAAL (141 aa). H104 lines the heme b pocket.

This sequence belongs to the globin family.

In Anadara trapezia (Sydney cockle), this protein is Globin, minor.